Here is a 352-residue protein sequence, read N- to C-terminus: Cell division protein ZipA (352 aa).

The Periplasmic segment spans residues 1–6; it reads MKDLQL. Residues 7-27 form a helical membrane-spanning segment; the sequence is VLFVLGAIAIIAVLVHGFWSI. Residues 28–352 lie on the Cytoplasmic side of the membrane; sequence RKQQPKSMKQ…KDYLRRLNAA (325 aa). 2 disordered regions span residues 78-120 and 138-160; these read KPVL…HVEP and PAPTASTSMNTPKKIFNPSTSTA. The span at 83–105 shows a compositional bias: polar residues; that stretch reads TNLSQKPHSGTTKLTDTPLQDSL. Residues 111-120 show a composition bias toward basic and acidic residues; sequence HKTEPEHVEP. Residues 141-160 are compositionally biased toward polar residues; the sequence is TASTSMNTPKKIFNPSTSTA.

It belongs to the ZipA family. As to quaternary structure, interacts with FtsZ via their C-terminal domains.

The protein resides in the cell inner membrane. Essential cell division protein that stabilizes the FtsZ protofilaments by cross-linking them and that serves as a cytoplasmic membrane anchor for the Z ring. Also required for the recruitment to the septal ring of downstream cell division proteins. This Shewanella frigidimarina (strain NCIMB 400) protein is Cell division protein ZipA.